The chain runs to 266 residues: Phosphate import ATP-binding protein PstB 1 (266 aa).

Residues 21-261 (ISTQDLSVFY…PKGEITEDYI (241 aa)) enclose the ABC transporter domain. An ATP-binding site is contributed by 54 to 61 (GGSGSGKS).

It belongs to the ABC transporter superfamily. Phosphate importer (TC 3.A.1.7) family. As to quaternary structure, the complex is composed of two ATP-binding proteins (PstB), two transmembrane proteins (PstC and PstA) and a solute-binding protein (PstS).

Its subcellular location is the cell membrane. The catalysed reaction is phosphate(out) + ATP + H2O = ADP + 2 phosphate(in) + H(+). Functionally, part of the ABC transporter complex PstSACB involved in phosphate import. Responsible for energy coupling to the transport system. The chain is Phosphate import ATP-binding protein PstB 1 from Lactobacillus johnsonii (strain CNCM I-12250 / La1 / NCC 533).